The chain runs to 172 residues: Ribosome maturation factor RimM (172 aa).

The PRC barrel domain maps to 96-168 (EGEFYYHQII…RVDVELMEGL (73 aa)).

It belongs to the RimM family. As to quaternary structure, binds ribosomal protein uS19.

Its subcellular location is the cytoplasm. An accessory protein needed during the final step in the assembly of 30S ribosomal subunit, possibly for assembly of the head region. Essential for efficient processing of 16S rRNA. May be needed both before and after RbfA during the maturation of 16S rRNA. It has affinity for free ribosomal 30S subunits but not for 70S ribosomes. This chain is Ribosome maturation factor RimM, found in Streptococcus pyogenes serotype M6 (strain ATCC BAA-946 / MGAS10394).